Reading from the N-terminus, the 366-residue chain is Class I histocompatibility antigen, Gogo-C*0203 alpha chain (366 aa).

The N-terminal stretch at 1 to 24 (MRVMAPRTLILLLSGALALTETWA) is a signal peptide. Positions 25–114 (GSHSMRYFYT…LRGYYNQSED (90 aa)) are alpha-1. The Extracellular portion of the chain corresponds to 25–308 (GSHSMRYFYT…EPSSQPTIPI (284 aa)). An N-linked (GlcNAc...) asparagine glycan is attached at Asn110. Residues 115–206 (GSHTLQSMYG…ENGKETLQRA (92 aa)) are alpha-2. 2 disulfide bridges follow: Cys125-Cys188 and Cys227-Cys283. Positions 207 to 298 (EPPKTHVTHH…GLPEPLTLRW (92 aa)) are alpha-3. The region spanning 209 to 297 (PKTHVTHHPL…EGLPEPLTLR (89 aa)) is the Ig-like C1-type domain. A connecting peptide region spans residues 299-308 (EPSSQPTIPI). The chain crosses the membrane as a helical span at residues 309–332 (VGIVVGLAVLVVLAVLGAVVTAMM). Topologically, residues 333–366 (CRRKSSGGKGGSCSQAACSNSAQGSDESLITCKA) are cytoplasmic.

This sequence belongs to the MHC class I family. In terms of assembly, heterodimer of an alpha chain and a beta chain (beta-2-microglobulin).

It localises to the membrane. Its function is as follows. Involved in the presentation of foreign antigens to the immune system. The polypeptide is Class I histocompatibility antigen, Gogo-C*0203 alpha chain (Gorilla gorilla gorilla (Western lowland gorilla)).